The primary structure comprises 461 residues: Ribitol-5-phosphate transferase FKTN (461 aa).

Topologically, residues 1 to 7 are cytoplasmic; sequence MSRINKN. The tract at residues 6-27 is required and sufficient for interaction with POMGNT1; sequence KNVVLALLTLTSSAFLLFQLYY. Residues 8–28 form a helical; Signal-anchor for type II membrane protein membrane-spanning segment; it reads VVLALLTLTSSAFLLFQLYYY. Over 29-461 the chain is Lumenal; it reads KHYLSTKNGA…SEWDEVIQLY (433 aa). The N-linked (GlcNAc...) asparagine glycan is linked to Asn-92.

It belongs to the LicD transferase family. Forms a complex composed of FKTN/fukutin, FKRP and RXYLT1/TMEM5. Interacts (via transmembrane domain) with POMGNT1; the interaction is direct and is required for normal POMGNT1 location in Golgi membranes. In terms of tissue distribution, expressed in the retina (at protein level). Widely expressed with highest expression in brain, heart, pancreas and skeletal muscle. Expressed at similar levels in control fetal and adult brain. Expressed in migrating neurons, including Cajar-Retzius cells and adult cortical neurons, as well as hippocampal pyramidal cells and cerebellar Purkinje cells. No expression observed in the glia limitans, the subpial astrocytes (which contribute to basement membrane formation) or other glial cells.

The protein resides in the golgi apparatus membrane. The protein localises to the cytoplasm. It is found in the nucleus. It catalyses the reaction 3-O-[beta-D-GalNAc-(1-&gt;3)-beta-D-GlcNAc-(1-&gt;4)-(O-6-P-alpha-D-Man)]-Thr-[protein] + CDP-L-ribitol = 3-O-[Rib-ol-P-3-beta-D-GalNAc-(1-&gt;3)-beta-D-GlcNAc-(1-&gt;4)-(O-6-P-alpha-D-Man)]-Thr-[protein] + CMP + H(+). Its pathway is protein modification; protein glycosylation. Catalyzes the transfer of a ribitol-phosphate from CDP-ribitol to the distal N-acetylgalactosamine of the phosphorylated O-mannosyl trisaccharide (N-acetylgalactosamine-beta-3-N-acetylglucosamine-beta-4-(phosphate-6-)mannose), a carbohydrate structure present in alpha-dystroglycan (DAG1). This constitutes the first step in the formation of the ribitol 5-phosphate tandem repeat which links the phosphorylated O-mannosyl trisaccharide to the ligand binding moiety composed of repeats of 3-xylosyl-alpha-1,3-glucuronic acid-beta-1. Required for normal location of POMGNT1 in Golgi membranes, and for normal POMGNT1 activity. May interact with and reinforce a large complex encompassing the outside and inside of muscle membranes. Could be involved in brain development. The protein is Ribitol-5-phosphate transferase FKTN of Homo sapiens (Human).